An 82-amino-acid polypeptide reads, in one-letter code: Large ribosomal subunit protein bL31B (82 aa).

This sequence belongs to the bacterial ribosomal protein bL31 family. Type B subfamily. Part of the 50S ribosomal subunit.

This is Large ribosomal subunit protein bL31B from Pectobacterium carotovorum subsp. carotovorum (strain PC1).